Reading from the N-terminus, the 262-residue chain is Sepiapterin reductase (262 aa).

Met1 carries the N-acetylmethionine modification. NADP(+)-binding positions include 15-21 (GASRGFG) and 43-44 (RS). Ser46 carries the post-translational modification Phosphoserine. Residue 70–71 (DL) coordinates NADP(+). Substrate is bound by residues 158 to 159 (SL) and Tyr171. An NADP(+)-binding site is contributed by Lys175. Ser196 carries the phosphoserine modification. Gly200 serves as a coordination point for substrate. 202 to 207 (LDTDMQ) is a binding site for NADP(+). Ser214 carries the phosphoserine modification. A substrate-binding site is contributed by Asp258.

This sequence belongs to the sepiapterin reductase family. In terms of assembly, homodimer.

The protein localises to the cytoplasm. The catalysed reaction is L-erythro-7,8-dihydrobiopterin + NADP(+) = L-sepiapterin + NADPH + H(+). It catalyses the reaction (6R)-L-erythro-5,6,7,8-tetrahydrobiopterin + 2 NADP(+) = 6-pyruvoyl-5,6,7,8-tetrahydropterin + 2 NADPH + 2 H(+). The enzyme catalyses (S)-benzoin + NADP(+) = benzil + NADPH + H(+). Functionally, catalyzes the final one or two reductions in tetra-hydrobiopterin biosynthesis to form 5,6,7,8-tetrahydrobiopterin. The enzyme also catalyzes the reduction of benzil to (S)-benzoin. This Meriones unguiculatus (Mongolian jird) protein is Sepiapterin reductase (SPR).